Here is a 123-residue protein sequence, read N- to C-terminus: MPTINQLVRSPRKSRALLNKAPALQHNPQKRAVCVKVYTTTPRKPNSALRKVARVKIAGYGSEVIAYIPGEGHNLQEHSVVLIRGGRVKDLPGVRYHIIRGALDSRGVQNRKKARSKYGVKKS.

Position 90 is a 3-methylthioaspartic acid (Asp90).

The protein belongs to the universal ribosomal protein uS12 family. Part of the 30S ribosomal subunit. Contacts proteins S8 and S17. May interact with IF1 in the 30S initiation complex.

Its function is as follows. With S4 and S5 plays an important role in translational accuracy. In terms of biological role, interacts with and stabilizes bases of the 16S rRNA that are involved in tRNA selection in the A site and with the mRNA backbone. Located at the interface of the 30S and 50S subunits, it traverses the body of the 30S subunit contacting proteins on the other side and probably holding the rRNA structure together. The combined cluster of proteins S8, S12 and S17 appears to hold together the shoulder and platform of the 30S subunit. The chain is Small ribosomal subunit protein uS12 from Ehrlichia ruminantium (strain Gardel).